Reading from the N-terminus, the 53-residue chain is Mannose/glucose-specific lectin alpha chain (53 aa).

This sequence belongs to the leguminous lectin family. In terms of assembly, heterodimer of an alpha and a beta chain.

This lectin specifically binds mannose and glucose. The sequence is that of Mannose/glucose-specific lectin alpha chain from Vicia cracca (Bird vetch).